The primary structure comprises 131 residues: Large ribosomal subunit protein bL17 (131 aa).

The protein belongs to the bacterial ribosomal protein bL17 family. In terms of assembly, part of the 50S ribosomal subunit. Contacts protein L32.

The sequence is that of Large ribosomal subunit protein bL17 from Thermotoga neapolitana (strain ATCC 49049 / DSM 4359 / NBRC 107923 / NS-E).